We begin with the raw amino-acid sequence, 321 residues long: Probable GDP-L-fucose synthase (321 aa).

8-14 (GGTGLVG) contacts NADP(+). The active-site Proton donor/acceptor is Tyr136. Residues Lys140, 163–166 (PCNI), and His179 each bind NADP(+). Residues Arg187, Arg215, and Asp277 each coordinate substrate.

The protein belongs to the NAD(P)-dependent epimerase/dehydratase family. Fucose synthase subfamily. In terms of assembly, homodimer.

It carries out the reaction GDP-beta-L-fucose + NADP(+) = GDP-4-dehydro-alpha-D-rhamnose + NADPH + H(+). Its pathway is nucleotide-sugar biosynthesis; GDP-L-fucose biosynthesis via de novo pathway; GDP-L-fucose from GDP-alpha-D-mannose: step 2/2. Its function is as follows. Catalyzes the two-step NADP-dependent conversion of GDP-4-dehydro-6-deoxy-D-mannose to GDP-fucose, involving an epimerase and a reductase reaction. In Drosophila melanogaster (Fruit fly), this protein is Probable GDP-L-fucose synthase (Gmer).